A 468-amino-acid polypeptide reads, in one-letter code: MNLKLSAIESYFFHRSRLNLHSCFYVGIKLNELPKKSQLIAALKYTVIQHERLTCNVFYDELKKENFLQNILEPLKFCDLVEYRHDWDQLGETEINHIFQRYNFSYNENKPLWKILILPNQNQMLLLTDHVLMDGMSAIHVWETFMEGLQMQQPVEIDETIYSPSLNSSTEKIMSAPLYGDWPIPWNWHIVRQLVSRLHYWFPQTVVKNNRNLIQFANYSFPKDLLDDKPSDGTQKYKVKNTNHQWEFRLSPTHLNDILQECKANNTSLTSLLGALVCTSFEKIAAHEYTGSFLKIELPMNIRKPFERVLKLPSDDKLAVGNFIAVIEFNHKLHQNRGIWDIASQIQRAIRSSSEDKIIDKVNEVKLLEVISSQQYIEDKISLNNGPSSTFEVTNLGFQTFKDACNTSLPFYIVDATFNEPQGISSIFSLSVISTPGNGLHCCISYPNTLTKVLEPHWQYMKDYLNLY.

The protein localises to the endoplasmic reticulum. Functionally, confers resistance to the sphingolipid biosynthesis inhibitor drug myriocin (ISP-1). Inactivates ISP-1 by converting it into N-acetyl-myriocin. Cooperates with YPK1 in mediating resistance to myriocin. The sequence is that of N-acetyltransferase SLI1 (SLI1) from Saccharomyces cerevisiae (strain ATCC 204508 / S288c) (Baker's yeast).